The following is a 196-amino-acid chain: Ribonuclease HII (196 aa).

The region spanning 9–196 (KLVAGVDEVG…KPVRHALGIE (188 aa)) is the RNase H type-2 domain. Residues D15, E16, and D107 each coordinate a divalent metal cation.

The protein belongs to the RNase HII family. Mn(2+) is required as a cofactor. Mg(2+) serves as cofactor.

It localises to the cytoplasm. The catalysed reaction is Endonucleolytic cleavage to 5'-phosphomonoester.. Endonuclease that specifically degrades the RNA of RNA-DNA hybrids. The polypeptide is Ribonuclease HII (Aeromonas salmonicida (strain A449)).